A 326-amino-acid polypeptide reads, in one-letter code: GTP cyclohydrolase MptA (326 aa).

It belongs to the GTP cyclohydrolase IV family. As to quaternary structure, homodimer. Fe(2+) serves as cofactor.

It carries out the reaction GTP + H2O = 7,8-dihydroneopterin 2',3'-cyclic phosphate + formate + diphosphate + H(+). The protein operates within cofactor biosynthesis; 5,6,7,8-tetrahydromethanopterin biosynthesis. Its function is as follows. Converts GTP to 7,8-dihydro-D-neopterin 2',3'-cyclic phosphate, the first intermediate in the biosynthesis of coenzyme methanopterin. The chain is GTP cyclohydrolase MptA from Methanoregula boonei (strain DSM 21154 / JCM 14090 / 6A8).